The chain runs to 83 residues: Small ribosomal subunit protein uS17 (83 aa).

This sequence belongs to the universal ribosomal protein uS17 family. As to quaternary structure, part of the 30S ribosomal subunit.

In terms of biological role, one of the primary rRNA binding proteins, it binds specifically to the 5'-end of 16S ribosomal RNA. In Ehrlichia chaffeensis (strain ATCC CRL-10679 / Arkansas), this protein is Small ribosomal subunit protein uS17.